The primary structure comprises 145 residues: Peptide methionine sulfoxide reductase MsrB (145 aa).

The MsrB domain occupies 6-129 (KNERLQQLTD…NSAALRFIPV (124 aa)). Cys118 serves as the catalytic Nucleophile.

Belongs to the MsrB Met sulfoxide reductase family.

The catalysed reaction is L-methionyl-[protein] + [thioredoxin]-disulfide + H2O = L-methionyl-(R)-S-oxide-[protein] + [thioredoxin]-dithiol. The chain is Peptide methionine sulfoxide reductase MsrB from Listeria monocytogenes serotype 4a (strain HCC23).